Consider the following 333-residue polypeptide: 2-oxoglutarate-dependent dioxygenase ucsF (333 aa).

The Fe2OG dioxygenase domain maps to 174–296 (NASELRLNHY…RYSIAYLCKA (123 aa)). Fe cation is bound by residues H202, D204, and H264. R287 lines the 2-oxoglutarate pocket.

This sequence belongs to the iron/ascorbate-dependent oxidoreductase family. Fe(2+) serves as cofactor.

It participates in mycotoxin biosynthesis. 2-oxoglutarate-dependent dioxygenase; part of the gene cluster that mediates the biosynthesis of UCS1025A, a member of the pyrrolizidinone family that acts as a strong telomerase inhibitor and displays potent antibacterial and antitumor properties. These compounds share a hemiaminal-containing pyrrolizidinone core fused with a gamma-lactone, giving a furopyrrolizidine that is connected to a decalin fragment. The polyketide synthase module (PKS) of the PKS-NRPS ucsA is responsible for the synthesis of the polyketide backbone via the condensation of an acetyl-CoA starter unit with 6 malonyl-CoA units. The downstream nonribosomal peptide synthetase (NRPS) module then amidates the carboxyl end of the polyketide with a 2S,3S-methylproline derived from L-isoleucine by the 2-oxoglutarate-dependent dioxygenase ucsF which converts L-isoleucine to (4S,5S)-4-methylpyrroline-5-carboxylate that is further converted to 2S,3S-methylproline by the pyrroline-5-carboxylate reductase ucsG. Reductive release of the completed aminoacyl polyketide from the assembly line can form the 3-pyrrolin-2-one structure via an intramolecular Knoevenagel reaction. Because ucsA lacks a designated enoylreductase (ER) domain, the required activity is provided the enoyl reductase ucsL. This keto acyclic precursor is the substrate of the Diels-Alderase ucsH, that catalyzes the Diels-Alder cycloaddition. Oxidation of the 3S-methyl group to a carboxylate by the cytochrome P450 monooxygenase ucsK allows an oxa-Michael cyclization that might involve the reductase/dehydrogenase ucsI and which furnishes the furopyrrolizidine. The oxidase ucsJ likely plays a critical role in stereoselective reduction of the C5-C6 double bond to afford the required R-configured carboxylate group. Further enolization and oxidation at C5 by an unidentified enzyme affords the last intermediate that can undergo oxa-Michael cyclization to yield UCS1025A. The protein is 2-oxoglutarate-dependent dioxygenase ucsF of Acremonium sp.